A 249-amino-acid chain; its full sequence is Octanoyltransferase (249 aa).

Residues 53 to 234 (PDTDDEIWVV…RLIAHLDGAT (182 aa)) enclose the BPL/LPL catalytic domain. Substrate is bound by residues 93-100 (RGGQITYH), 165-167 (ALG), and 178-180 (GLS). Residue Cys-196 is the Acyl-thioester intermediate of the active site.

The protein belongs to the LipB family.

Its subcellular location is the cytoplasm. It carries out the reaction octanoyl-[ACP] + L-lysyl-[protein] = N(6)-octanoyl-L-lysyl-[protein] + holo-[ACP] + H(+). Its pathway is protein modification; protein lipoylation via endogenous pathway; protein N(6)-(lipoyl)lysine from octanoyl-[acyl-carrier-protein]: step 1/2. Catalyzes the transfer of endogenously produced octanoic acid from octanoyl-acyl-carrier-protein onto the lipoyl domains of lipoate-dependent enzymes. Lipoyl-ACP can also act as a substrate although octanoyl-ACP is likely to be the physiological substrate. In Burkholderia mallei (strain NCTC 10247), this protein is Octanoyltransferase.